A 92-amino-acid polypeptide reads, in one-letter code: Putative transcription elongation factor S-II-like protein 81R (92 aa).

The segment at 51–91 (GTVKCPGCGSRRVHALQRQTRSADEPMTLFAMCSECGKRWT) adopts a TFIIS-type zinc-finger fold. Residues C55, C58, C83, and C86 each coordinate Zn(2+).

This is Putative transcription elongation factor S-II-like protein 81R from Dryophytes versicolor (chameleon treefrog).